The primary structure comprises 754 residues: 1,4-alpha-glucan branching enzyme GlgB (754 aa).

The active-site Nucleophile is the Asp431. The active-site Proton donor is Glu484.

It belongs to the glycosyl hydrolase 13 family. GlgB subfamily. As to quaternary structure, monomer.

It carries out the reaction Transfers a segment of a (1-&gt;4)-alpha-D-glucan chain to a primary hydroxy group in a similar glucan chain.. It participates in glycan biosynthesis; glycogen biosynthesis. Catalyzes the formation of the alpha-1,6-glucosidic linkages in glycogen by scission of a 1,4-alpha-linked oligosaccharide from growing alpha-1,4-glucan chains and the subsequent attachment of the oligosaccharide to the alpha-1,6 position. This is 1,4-alpha-glucan branching enzyme GlgB from Prochlorococcus marinus (strain MIT 9301).